The primary structure comprises 247 residues: Adenosylcobinamide-GDP ribazoletransferase (247 aa).

Transmembrane regions (helical) follow at residues 34 to 54 (IVMF…IFIL), 59 to 79 (CGIP…TGGF), 113 to 133 (GGLA…ELAL), 138 to 158 (MLAA…LLMY), and 187 to 207 (LAVI…AMVV).

This sequence belongs to the CobS family. Mg(2+) serves as cofactor.

It is found in the cell inner membrane. The catalysed reaction is alpha-ribazole + adenosylcob(III)inamide-GDP = adenosylcob(III)alamin + GMP + H(+). It carries out the reaction alpha-ribazole 5'-phosphate + adenosylcob(III)inamide-GDP = adenosylcob(III)alamin 5'-phosphate + GMP + H(+). Its pathway is cofactor biosynthesis; adenosylcobalamin biosynthesis; adenosylcobalamin from cob(II)yrinate a,c-diamide: step 7/7. Its function is as follows. Joins adenosylcobinamide-GDP and alpha-ribazole to generate adenosylcobalamin (Ado-cobalamin). Also synthesizes adenosylcobalamin 5'-phosphate from adenosylcobinamide-GDP and alpha-ribazole 5'-phosphate. This is Adenosylcobinamide-GDP ribazoletransferase from Salmonella choleraesuis (strain SC-B67).